A 378-amino-acid chain; its full sequence is Acetylornithine deacetylase (378 aa).

Position 76 (His76) interacts with Zn(2+). Asp78 is a catalytic residue. Zn(2+) is bound at residue Asp108. Glu140 is a catalytic residue. Zn(2+) contacts are provided by Glu141, Glu165, and His351.

This sequence belongs to the peptidase M20A family. ArgE subfamily. As to quaternary structure, homodimer. Requires Zn(2+) as cofactor. Co(2+) is required as a cofactor. The cofactor is glutathione.

The protein resides in the cytoplasm. The enzyme catalyses N(2)-acetyl-L-ornithine + H2O = L-ornithine + acetate. It functions in the pathway amino-acid biosynthesis; L-arginine biosynthesis; L-ornithine from N(2)-acetyl-L-ornithine (linear): step 1/1. Catalyzes the hydrolysis of the amide bond of N(2)-acetylated L-amino acids. Cleaves the acetyl group from N-acetyl-L-ornithine to form L-ornithine, an intermediate in L-arginine biosynthesis pathway, and a branchpoint in the synthesis of polyamines. The chain is Acetylornithine deacetylase from Aliivibrio salmonicida (strain LFI1238) (Vibrio salmonicida (strain LFI1238)).